The sequence spans 296 residues: Cytidine deaminase (296 aa).

CMP/dCMP-type deaminase domains lie at 47 to 167 and 186 to 296; these read TEAE…FGPK and DSSD…VDPV. 88-90 is a substrate binding site; it reads NLE. His-101 contributes to the Zn(2+) binding site. Glu-103 (proton donor) is an active-site residue. Cys-128 and Cys-131 together coordinate Zn(2+).

It belongs to the cytidine and deoxycytidylate deaminase family. In terms of assembly, homodimer. Zn(2+) serves as cofactor.

The catalysed reaction is cytidine + H2O + H(+) = uridine + NH4(+). It catalyses the reaction 2'-deoxycytidine + H2O + H(+) = 2'-deoxyuridine + NH4(+). This enzyme scavenges exogenous and endogenous cytidine and 2'-deoxycytidine for UMP synthesis. This Shewanella sp. (strain W3-18-1) protein is Cytidine deaminase.